Here is a 177-residue protein sequence, read N- to C-terminus: ATP synthase subunit delta (177 aa).

Belongs to the ATPase delta chain family. As to quaternary structure, F-type ATPases have 2 components, F(1) - the catalytic core - and F(0) - the membrane proton channel. F(1) has five subunits: alpha(3), beta(3), gamma(1), delta(1), epsilon(1). F(0) has three main subunits: a(1), b(2) and c(10-14). The alpha and beta chains form an alternating ring which encloses part of the gamma chain. F(1) is attached to F(0) by a central stalk formed by the gamma and epsilon chains, while a peripheral stalk is formed by the delta and b chains.

It is found in the cell inner membrane. In terms of biological role, f(1)F(0) ATP synthase produces ATP from ADP in the presence of a proton or sodium gradient. F-type ATPases consist of two structural domains, F(1) containing the extramembraneous catalytic core and F(0) containing the membrane proton channel, linked together by a central stalk and a peripheral stalk. During catalysis, ATP synthesis in the catalytic domain of F(1) is coupled via a rotary mechanism of the central stalk subunits to proton translocation. Its function is as follows. This protein is part of the stalk that links CF(0) to CF(1). It either transmits conformational changes from CF(0) to CF(1) or is implicated in proton conduction. This is ATP synthase subunit delta from Shewanella frigidimarina (strain NCIMB 400).